The sequence spans 136 residues: DNA-directed RNA polymerase subunit omega (136 aa).

Belongs to the RNA polymerase subunit omega family. The RNAP catalytic core consists of 2 alpha, 1 beta, 1 beta' and 1 omega subunit. When a sigma factor is associated with the core the holoenzyme is formed, which can initiate transcription.

It carries out the reaction RNA(n) + a ribonucleoside 5'-triphosphate = RNA(n+1) + diphosphate. Its function is as follows. Promotes RNA polymerase assembly. Latches the N- and C-terminal regions of the beta' subunit thereby facilitating its interaction with the beta and alpha subunits. In Methylorubrum extorquens (strain CM4 / NCIMB 13688) (Methylobacterium extorquens), this protein is DNA-directed RNA polymerase subunit omega.